Reading from the N-terminus, the 317-residue chain is Long form salivary protein D7L2 (317 aa).

Positions 1-20 (MYKLLVALHLILCTVSHVKT) are cleaved as a signal peptide. Intrachain disulfides connect Cys-39–Cys-76, Cys-72–Cys-131, Cys-181–Cys-214, Cys-195–Cys-316, and Cys-255–Cys-266. Trp-58 and Tyr-73 together coordinate thromboxane A2. Glu-182, Tyr-264, Asp-281, Asp-284, and Met-308 together coordinate serotonin.

This sequence belongs to the PBP/GOBP family. In terms of tissue distribution, female salivary gland.

The protein localises to the secreted. In terms of biological role, modulates blood feeding of female mosquitoes on vertebrate species by binding and sequestering different mediators involved in the host response, such as biogenic amines and eicosanoids. Binds serotonin with high affinity. Binds tryptamine, octopamine, dopamine and noradrenaline with low affinity. Binds leukotriene C4, leukotriene D4, leukotriene E4 and U-46619, a stable analog of thromboxane A2. Does not bind leukotriene B4, adrenaline, histamine and ADP. Inhibits platelet aggregation induced by low concentrations of collagen and arachidonic acid but not by ADP or adrenaline. The polypeptide is Long form salivary protein D7L2 (Anopheles darlingi (Mosquito)).